A 152-amino-acid chain; its full sequence is UPF0225 protein YchJ (152 aa).

It belongs to the UPF0225 family.

This chain is UPF0225 protein YchJ, found in Escherichia coli O6:K15:H31 (strain 536 / UPEC).